The following is a 465-amino-acid chain: Cysteine--tRNA ligase (465 aa).

Cys28 contacts Zn(2+). The short motif at 30–40 (PTVYNYIHVGN) is the 'HIGH' region element. The Zn(2+) site is built by Cys208, His233, and Glu237. Residues 265–269 (KMSKS) carry the 'KMSKS' region motif. Lys268 lines the ATP pocket.

Belongs to the class-I aminoacyl-tRNA synthetase family. As to quaternary structure, monomer. Zn(2+) is required as a cofactor.

It is found in the cytoplasm. It carries out the reaction tRNA(Cys) + L-cysteine + ATP = L-cysteinyl-tRNA(Cys) + AMP + diphosphate. This is Cysteine--tRNA ligase from Exiguobacterium sp. (strain ATCC BAA-1283 / AT1b).